The chain runs to 378 residues: Erythronate-4-phosphate dehydrogenase (378 aa).

Positions 45 and 66 each coordinate substrate. NAD(+) contacts are provided by aspartate 146 and threonine 175. Residue arginine 208 is part of the active site. Residue aspartate 232 participates in NAD(+) binding. The active site involves glutamate 237. The active-site Proton donor is histidine 254. Glycine 257 contacts NAD(+). Substrate is bound at residue tyrosine 258.

It belongs to the D-isomer specific 2-hydroxyacid dehydrogenase family. PdxB subfamily. As to quaternary structure, homodimer.

It is found in the cytoplasm. The enzyme catalyses 4-phospho-D-erythronate + NAD(+) = (R)-3-hydroxy-2-oxo-4-phosphooxybutanoate + NADH + H(+). It functions in the pathway cofactor biosynthesis; pyridoxine 5'-phosphate biosynthesis; pyridoxine 5'-phosphate from D-erythrose 4-phosphate: step 2/5. Functionally, catalyzes the oxidation of erythronate-4-phosphate to 3-hydroxy-2-oxo-4-phosphonooxybutanoate. The protein is Erythronate-4-phosphate dehydrogenase of Escherichia fergusonii (strain ATCC 35469 / DSM 13698 / CCUG 18766 / IAM 14443 / JCM 21226 / LMG 7866 / NBRC 102419 / NCTC 12128 / CDC 0568-73).